Here is a 340-residue protein sequence, read N- to C-terminus: Trimethylamine N-oxide transport system ATP-binding protein TmoW (340 aa).

The ABC transporter domain occupies Gly-32 to Thr-268. Position 64–71 (Gly-64–Ser-71) interacts with ATP.

It belongs to the ABC transporter superfamily. In terms of assembly, the complex is probably composed of two ATP-binding proteins (TmoW), two transmembrane proteins (TmoV) and a solute-binding protein (TmoX).

It is found in the cell inner membrane. The enzyme catalyses a quaternary ammonium(out) + ATP + H2O = a quaternary ammonium(in) + ADP + phosphate + H(+). In terms of biological role, part of the ABC transporter complex TmoXWV involved in trimethylamine N-oxide (TMAO) import. Responsible for energy coupling to the transport system. Is specific for TMAO and essential for TMAO metabolism. The protein is Trimethylamine N-oxide transport system ATP-binding protein TmoW of Ruegeria pomeroyi (strain ATCC 700808 / DSM 15171 / DSS-3) (Silicibacter pomeroyi).